A 351-amino-acid chain; its full sequence is MTIAIGQNQERGLFDLIDDWLKKDRFVFIGWSGLLLFPTAYLAAGGWMTGTTFVTSWYTHGLASSYLEGCNFLTAAVSTPANSMGHSLLLLWGPEAQGDFTRWCQIGGLWAFIALHGAFGLIGFCLRQFEIARLVGIRPYNAIAFSGPIAVFVSVFLLYPLGQASWFFAPSFGVAAIFRFLLFLQGFHNWTLNPFHMMGVAGILGGALLCAIHGATVENTLFEDGDAANTFRAFTPTQSEETYSMVTANRFWSQIFGVAFSNKRWLHFFMLFVPVTGLWTSAIGIVGLALNLRAYDFVSQELRAAEDPEFETFYTKNILLNEGIRAWMAAQDQPHENFVFPEEVLPRGNAL.

Residues 39–59 form a helical membrane-spanning segment; sequence TAYLAAGGWMTGTTFVTSWYT. His-116 serves as a coordination point for chlorophyll a. A helical membrane pass occupies residues 123–139; that stretch reads GFCLRQFEIARLVGIRP. Gln-128 and Asn-141 together coordinate pheophytin a. The helical transmembrane segment at 151–164 threads the bilayer; that stretch reads VFVSVFLLYPLGQA. His-196 lines the chlorophyll a pocket. The helical transmembrane segment at 206 to 226 threads the bilayer; that stretch reads GALLCAIHGATVENTLFEDGD. His-213 and Phe-260 together coordinate a plastoquinone. A Fe cation-binding site is contributed by His-213. His-267 is a binding site for Fe cation. A helical transmembrane segment spans residues 277–293; the sequence is GLWTSAIGIVGLALNLR.

Belongs to the reaction center PufL/M/PsbA/D family. PSII is composed of 1 copy each of membrane proteins PsbA, PsbB, PsbC, PsbD, PsbE, PsbF, PsbH, PsbI, PsbJ, PsbK, PsbL, PsbM, PsbT, PsbX, PsbY, PsbZ, Psb30/Ycf12, at least 3 peripheral proteins of the oxygen-evolving complex and a large number of cofactors. It forms dimeric complexes. The D1/D2 heterodimer binds P680, chlorophylls that are the primary electron donor of PSII, and subsequent electron acceptors. It shares a non-heme iron and each subunit binds pheophytin, quinone, additional chlorophylls, carotenoids and lipids. There is also a Cl(-1) ion associated with D1 and D2, which is required for oxygen evolution. The PSII complex binds additional chlorophylls, carotenoids and specific lipids. serves as cofactor.

It localises to the plastid. The protein localises to the chloroplast thylakoid membrane. It catalyses the reaction 2 a plastoquinone + 4 hnu + 2 H2O = 2 a plastoquinol + O2. Functionally, photosystem II (PSII) is a light-driven water:plastoquinone oxidoreductase that uses light energy to abstract electrons from H(2)O, generating O(2) and a proton gradient subsequently used for ATP formation. It consists of a core antenna complex that captures photons, and an electron transfer chain that converts photonic excitation into a charge separation. The D1/D2 (PsbA/PsbD) reaction center heterodimer binds P680, the primary electron donor of PSII as well as several subsequent electron acceptors. D2 is needed for assembly of a stable PSII complex. The polypeptide is Photosystem II D2 protein (Trieres chinensis (Marine centric diatom)).